The chain runs to 558 residues: ATP synthase subunit alpha (558 aa).

Residue Gly-172–Thr-179 participates in ATP binding. Residues Glu-536–Arg-558 form a disordered region. Basic and acidic residues predominate over residues Thr-548–Arg-558.

The protein belongs to the ATPase alpha/beta chains family. In terms of assembly, F-type ATPases have 2 components, CF(1) - the catalytic core - and CF(0) - the membrane proton channel. CF(1) has five subunits: alpha(3), beta(3), gamma(1), delta(1), epsilon(1). CF(0) has three main subunits: a(1), b(2) and c(9-12). The alpha and beta chains form an alternating ring which encloses part of the gamma chain. CF(1) is attached to CF(0) by a central stalk formed by the gamma and epsilon chains, while a peripheral stalk is formed by the delta and b chains.

It is found in the cell membrane. It carries out the reaction ATP + H2O + 4 H(+)(in) = ADP + phosphate + 5 H(+)(out). In terms of biological role, produces ATP from ADP in the presence of a proton gradient across the membrane. The alpha chain is a regulatory subunit. The protein is ATP synthase subunit alpha of Mycobacterium leprae (strain Br4923).